Consider the following 61-residue polypeptide: Large ribosomal subunit protein uL29 (61 aa).

It belongs to the universal ribosomal protein uL29 family.

This Xanthomonas euvesicatoria pv. vesicatoria (strain 85-10) (Xanthomonas campestris pv. vesicatoria) protein is Large ribosomal subunit protein uL29.